The primary structure comprises 156 residues: Ribonuclease H (156 aa).

The region spanning 1 to 142 (MGKQVEIFTD…CDELARAAAN (142 aa)) is the RNase H type-1 domain. Mg(2+) is bound by residues Asp-10, Glu-48, Asp-70, and Asp-134.

The protein belongs to the RNase H family. As to quaternary structure, monomer. Mg(2+) is required as a cofactor.

The protein resides in the cytoplasm. The catalysed reaction is Endonucleolytic cleavage to 5'-phosphomonoester.. Functionally, endonuclease that specifically degrades the RNA of RNA-DNA hybrids. This is Ribonuclease H from Photorhabdus laumondii subsp. laumondii (strain DSM 15139 / CIP 105565 / TT01) (Photorhabdus luminescens subsp. laumondii).